We begin with the raw amino-acid sequence, 154 residues long: SsrA-binding protein (154 aa).

This sequence belongs to the SmpB family.

It is found in the cytoplasm. Required for rescue of stalled ribosomes mediated by trans-translation. Binds to transfer-messenger RNA (tmRNA), required for stable association of tmRNA with ribosomes. tmRNA and SmpB together mimic tRNA shape, replacing the anticodon stem-loop with SmpB. tmRNA is encoded by the ssrA gene; the 2 termini fold to resemble tRNA(Ala) and it encodes a 'tag peptide', a short internal open reading frame. During trans-translation Ala-aminoacylated tmRNA acts like a tRNA, entering the A-site of stalled ribosomes, displacing the stalled mRNA. The ribosome then switches to translate the ORF on the tmRNA; the nascent peptide is terminated with the 'tag peptide' encoded by the tmRNA and targeted for degradation. The ribosome is freed to recommence translation, which seems to be the essential function of trans-translation. This chain is SsrA-binding protein, found in Treponema pallidum (strain Nichols).